The chain runs to 338 residues: Phosphate acyltransferase (338 aa).

It belongs to the PlsX family. Homodimer. Probably interacts with PlsY.

The protein localises to the cytoplasm. It catalyses the reaction a fatty acyl-[ACP] + phosphate = an acyl phosphate + holo-[ACP]. The protein operates within lipid metabolism; phospholipid metabolism. In terms of biological role, catalyzes the reversible formation of acyl-phosphate (acyl-PO(4)) from acyl-[acyl-carrier-protein] (acyl-ACP). This enzyme utilizes acyl-ACP as fatty acyl donor, but not acyl-CoA. The polypeptide is Phosphate acyltransferase (Gloeobacter violaceus (strain ATCC 29082 / PCC 7421)).